The chain runs to 382 residues: Queuine tRNA-ribosyltransferase (382 aa).

Asp93 functions as the Proton acceptor in the catalytic mechanism. Substrate-binding positions include 93-97 (DSGGF), Asp147, Gln191, and Gly218. Positions 249-255 (GVGKPED) are RNA binding. Asp268 functions as the Nucleophile in the catalytic mechanism. The interval 273–277 (TRNAR) is RNA binding; important for wobble base 34 recognition. Zn(2+) is bound by residues Cys306, Cys308, Cys311, and His337.

This sequence belongs to the queuine tRNA-ribosyltransferase family. As to quaternary structure, homodimer. Within each dimer, one monomer is responsible for RNA recognition and catalysis, while the other monomer binds to the replacement base PreQ1. Zn(2+) is required as a cofactor.

It carries out the reaction 7-aminomethyl-7-carbaguanine + guanosine(34) in tRNA = 7-aminomethyl-7-carbaguanosine(34) in tRNA + guanine. The protein operates within tRNA modification; tRNA-queuosine biosynthesis. Its function is as follows. Catalyzes the base-exchange of a guanine (G) residue with the queuine precursor 7-aminomethyl-7-deazaguanine (PreQ1) at position 34 (anticodon wobble position) in tRNAs with GU(N) anticodons (tRNA-Asp, -Asn, -His and -Tyr). Catalysis occurs through a double-displacement mechanism. The nucleophile active site attacks the C1' of nucleotide 34 to detach the guanine base from the RNA, forming a covalent enzyme-RNA intermediate. The proton acceptor active site deprotonates the incoming PreQ1, allowing a nucleophilic attack on the C1' of the ribose to form the product. After dissociation, two additional enzymatic reactions on the tRNA convert PreQ1 to queuine (Q), resulting in the hypermodified nucleoside queuosine (7-(((4,5-cis-dihydroxy-2-cyclopenten-1-yl)amino)methyl)-7-deazaguanosine). The polypeptide is Queuine tRNA-ribosyltransferase (Actinobacillus pleuropneumoniae serotype 3 (strain JL03)).